The chain runs to 630 residues: tRNA uridine 5-carboxymethylaminomethyl modification enzyme MnmG (630 aa).

14–19 (GGGHAG) lines the FAD pocket. 282–296 (GTRYCPSIEDKVRKF) lines the NAD(+) pocket.

The protein belongs to the MnmG family. In terms of assembly, homodimer. Heterotetramer of two MnmE and two MnmG subunits. It depends on FAD as a cofactor.

It localises to the cytoplasm. Functionally, NAD-binding protein involved in the addition of a carboxymethylaminomethyl (cmnm) group at the wobble position (U34) of certain tRNAs, forming tRNA-cmnm(5)s(2)U34. The polypeptide is tRNA uridine 5-carboxymethylaminomethyl modification enzyme MnmG (Treponema pallidum (strain Nichols)).